Here is a 170-residue protein sequence, read N- to C-terminus: RNA pyrophosphohydrolase (170 aa).

The region spanning proline 9 to alanine 162 is the Nudix hydrolase domain. The short motif at glycine 50–glycine 71 is the Nudix box element.

The protein belongs to the Nudix hydrolase family. RppH subfamily. The cofactor is a divalent metal cation.

Accelerates the degradation of transcripts by removing pyrophosphate from the 5'-end of triphosphorylated RNA, leading to a more labile monophosphorylated state that can stimulate subsequent ribonuclease cleavage. The polypeptide is RNA pyrophosphohydrolase (Agrobacterium fabrum (strain C58 / ATCC 33970) (Agrobacterium tumefaciens (strain C58))).